The sequence spans 243 residues: Terpene cyclase paxB (243 aa).

A run of 7 helical transmembrane segments spans residues 23–43, 49–69, 78–98, 112–132, 134–154, 172–194, and 205–225; these read FVVG…YISF, GMSI…CLVF, GVFW…ITFS, ISLI…ALAL, IGPA…LSVG, LWAS…WMYW, and LVLW…ICFW.

Belongs to the paxB family.

It is found in the membrane. It functions in the pathway secondary metabolite biosynthesis. Terpene cyclase; part of the ATM2 gene cluster that mediates the biosynthesis of paxilline, a mycotoxin that acts as an inhibitor of mammalian maxi-K channels. PaxG, the geranylgeranyl diphosphate (GGPP) synthase is proposed to catalyze the first step in paxilline biosynthesis. Condensation of indole-3-glycerol phosphate with GGPP by paxC then forms 3-geranylgeranylindole (3-GGI), followed by epoxidation and cyclization of this intermediate (by paxM and paxB) to form paspaline. Paspaline is subsequently converted to 13-desoxypaxilline by paxP, the latter being then converted to paxilline by paxQ. Finally paxilline can be mono- and di-prenylated by paxD. The sequence is that of Terpene cyclase paxB from Penicillium paxilli.